A 388-amino-acid polypeptide reads, in one-letter code: Succinate--CoA ligase [ADP-forming] subunit beta (388 aa).

Positions 9 to 244 constitute an ATP-grasp domain; it reads KQLFAEYGLP…PSQEDSREAH (236 aa). Residues K46, 53-55, E99, T102, and E107 contribute to the ATP site; that span reads GRG. Positions 199 and 213 each coordinate Mg(2+). Substrate is bound by residues N264 and 321–323; that span reads GIV.

This sequence belongs to the succinate/malate CoA ligase beta subunit family. Heterotetramer of two alpha and two beta subunits. Requires Mg(2+) as cofactor.

The catalysed reaction is succinate + ATP + CoA = succinyl-CoA + ADP + phosphate. It carries out the reaction GTP + succinate + CoA = succinyl-CoA + GDP + phosphate. It participates in carbohydrate metabolism; tricarboxylic acid cycle; succinate from succinyl-CoA (ligase route): step 1/1. In terms of biological role, succinyl-CoA synthetase functions in the citric acid cycle (TCA), coupling the hydrolysis of succinyl-CoA to the synthesis of either ATP or GTP and thus represents the only step of substrate-level phosphorylation in the TCA. The beta subunit provides nucleotide specificity of the enzyme and binds the substrate succinate, while the binding sites for coenzyme A and phosphate are found in the alpha subunit. This chain is Succinate--CoA ligase [ADP-forming] subunit beta, found in Pseudoalteromonas translucida (strain TAC 125).